A 346-amino-acid polypeptide reads, in one-letter code: MSEPARLISPEKRGEDLDITLRPQSLDEFTGQAEARANLKVFIEAAKNRGEALDHVLFVGPPGLGKTTLAQIMAKELGVNFRSTSGPVIAKAGDLAALLTNLEERDVLFIDEIHRLNPAVEEILYPAMEDFQLDLIIGEGPAARSVKIDLSKFTLVAATTRLGLLTTPLRDRFGIPVRLSFYTVEELELIVRRGARLMNLPITEEGAREIARRARGTPRIAGRLLRRVRDFAEVARAEAVTREIADEALTRLLVDNVGFDQLDKRYLNMIAVNFGGGPVGIETIAAGLSEPRDAIEDIIEPYMIQQGFIQRTPRGRVLTAIAWKHLGMQPPKDMEAAQFRLFQEDN.

Residues 1–182 (MSEPARLISP…FGIPVRLSFY (182 aa)) are large ATPase domain (RuvB-L). ATP-binding positions include Leu21, Arg22, Gly63, Lys66, Thr67, Thr68, 129 to 131 (EDF), Arg172, Tyr182, and Arg219. Thr67 contacts Mg(2+). The interval 183 to 253 (TVEELELIVR…IADEALTRLL (71 aa)) is small ATPAse domain (RuvB-S). Residues 256–346 (NVGFDQLDKR…AQFRLFQEDN (91 aa)) form a head domain (RuvB-H) region. Arg292, Arg311, and Arg316 together coordinate DNA.

The protein belongs to the RuvB family. As to quaternary structure, homohexamer. Forms an RuvA(8)-RuvB(12)-Holliday junction (HJ) complex. HJ DNA is sandwiched between 2 RuvA tetramers; dsDNA enters through RuvA and exits via RuvB. An RuvB hexamer assembles on each DNA strand where it exits the tetramer. Each RuvB hexamer is contacted by two RuvA subunits (via domain III) on 2 adjacent RuvB subunits; this complex drives branch migration. In the full resolvosome a probable DNA-RuvA(4)-RuvB(12)-RuvC(2) complex forms which resolves the HJ.

It localises to the cytoplasm. The catalysed reaction is ATP + H2O = ADP + phosphate + H(+). Its function is as follows. The RuvA-RuvB-RuvC complex processes Holliday junction (HJ) DNA during genetic recombination and DNA repair, while the RuvA-RuvB complex plays an important role in the rescue of blocked DNA replication forks via replication fork reversal (RFR). RuvA specifically binds to HJ cruciform DNA, conferring on it an open structure. The RuvB hexamer acts as an ATP-dependent pump, pulling dsDNA into and through the RuvAB complex. RuvB forms 2 homohexamers on either side of HJ DNA bound by 1 or 2 RuvA tetramers; 4 subunits per hexamer contact DNA at a time. Coordinated motions by a converter formed by DNA-disengaged RuvB subunits stimulates ATP hydrolysis and nucleotide exchange. Immobilization of the converter enables RuvB to convert the ATP-contained energy into a lever motion, pulling 2 nucleotides of DNA out of the RuvA tetramer per ATP hydrolyzed, thus driving DNA branch migration. The RuvB motors rotate together with the DNA substrate, which together with the progressing nucleotide cycle form the mechanistic basis for DNA recombination by continuous HJ branch migration. Branch migration allows RuvC to scan DNA until it finds its consensus sequence, where it cleaves and resolves cruciform DNA. This is Holliday junction branch migration complex subunit RuvB from Rhizobium johnstonii (strain DSM 114642 / LMG 32736 / 3841) (Rhizobium leguminosarum bv. viciae).